Consider the following 151-residue polypeptide: Globin-2 B chain (151 aa).

Position 1 is an N-acetylserine (serine 1). Residues valine 11–leucine 151 enclose the Globin domain. Histidine 103 contacts heme b.

Belongs to the globin family. As to quaternary structure, heterotetramer of two alpha chains and two beta chains.

This chain is Globin-2 B chain, found in Anadara inaequivalvis (Inequivalve ark).